We begin with the raw amino-acid sequence, 897 residues long: Alanine--tRNA ligase (897 aa).

4 residues coordinate Zn(2+): histidine 591, histidine 595, cysteine 695, and histidine 699.

The protein belongs to the class-II aminoacyl-tRNA synthetase family. The cofactor is Zn(2+).

It localises to the cytoplasm. It catalyses the reaction tRNA(Ala) + L-alanine + ATP = L-alanyl-tRNA(Ala) + AMP + diphosphate. In terms of biological role, catalyzes the attachment of alanine to tRNA(Ala) in a two-step reaction: alanine is first activated by ATP to form Ala-AMP and then transferred to the acceptor end of tRNA(Ala). Also edits incorrectly charged Ser-tRNA(Ala) and Gly-tRNA(Ala) via its editing domain. The chain is Alanine--tRNA ligase from Methanobrevibacter smithii (strain ATCC 35061 / DSM 861 / OCM 144 / PS).